Consider the following 248-residue polypeptide: MEDPEKKLNQKSDGKPRKVRFKISSSYSGRVLKQVFEDGQELESPKEEYPHSFLQESLETMDGVYGSGEVPRPQMCSPKLTAQRISVFREGNAYTLAGGQPRFNDYKANDHKPLPIIDFGKIIIYTNNLKIIRTPMDKRDFVRKILQKEEEAEEESLMNKEESYGGRDQHDRPLVEAESTLPQNRYTQEGDIPEDSCFHCRGSGSATCSLCHGSKFSMLANRFKESYRALRCPACNENGLQPCQICNQ.

Composition is skewed to basic and acidic residues over residues 1 to 16 (MEDP…DGKP) and 157 to 172 (LMNK…QHDR). Disordered stretches follow at residues 1-20 (MEDP…RKVR) and 150-172 (EEAE…QHDR).

It belongs to the GRXCR2 family. In terms of assembly, interacts with TPRN; the interaction restricts TPRN to the stereocilum basal region.

Its subcellular location is the cell projection. It localises to the stereocilium. Functionally, required for hearing. Plays a role in maintaining cochlear stereocilia bundles that are involved in sound detection. Ensures the restriction of TPRN to the basal region of stereocilia in hair cells. This Homo sapiens (Human) protein is Glutaredoxin domain-containing cysteine-rich protein 2 (GRXCR2).